The sequence spans 64 residues: Defensin-like protein 41 (64 aa).

The disordered stretch occupies residues 1–21 (MTQGKRKHPCDLKNPSKRAPP). Intrachain disulfides connect Cys10/Cys61, Cys24/Cys47, Cys33/Cys56, and Cys37/Cys58.

The protein belongs to the DEFL family.

This Arabidopsis thaliana (Mouse-ear cress) protein is Defensin-like protein 41.